We begin with the raw amino-acid sequence, 444 residues long: N-succinylarginine dihydrolase (444 aa).

Residues 19-28, N110, and 137-138 contribute to the substrate site; these read AGLSFGNVAS and HR. E174 is an active-site residue. Substrate is bound at residue R214. H250 is an active-site residue. Positions 252 and 362 each coordinate substrate. Catalysis depends on C368, which acts as the Nucleophile.

The protein belongs to the succinylarginine dihydrolase family. Homodimer.

It carries out the reaction N(2)-succinyl-L-arginine + 2 H2O + 2 H(+) = N(2)-succinyl-L-ornithine + 2 NH4(+) + CO2. Its pathway is amino-acid degradation; L-arginine degradation via AST pathway; L-glutamate and succinate from L-arginine: step 2/5. Functionally, catalyzes the hydrolysis of N(2)-succinylarginine into N(2)-succinylornithine, ammonia and CO(2). This chain is N-succinylarginine dihydrolase, found in Shewanella sp. (strain ANA-3).